Reading from the N-terminus, the 141-residue chain is 6,7-dimethyl-8-ribityllumazine synthase (141 aa).

5-amino-6-(D-ribitylamino)uracil contacts are provided by residues Phe-13, 45–47 (SFE), and 69–71 (AII). 74 to 75 (DT) contributes to the (2S)-2-hydroxy-3-oxobutyl phosphate binding site. Catalysis depends on His-77, which acts as the Proton donor. Leu-102 contributes to the 5-amino-6-(D-ribitylamino)uracil binding site. Residue Arg-117 coordinates (2S)-2-hydroxy-3-oxobutyl phosphate.

The protein belongs to the DMRL synthase family.

It catalyses the reaction (2S)-2-hydroxy-3-oxobutyl phosphate + 5-amino-6-(D-ribitylamino)uracil = 6,7-dimethyl-8-(1-D-ribityl)lumazine + phosphate + 2 H2O + H(+). The protein operates within cofactor biosynthesis; riboflavin biosynthesis; riboflavin from 2-hydroxy-3-oxobutyl phosphate and 5-amino-6-(D-ribitylamino)uracil: step 1/2. Catalyzes the formation of 6,7-dimethyl-8-ribityllumazine by condensation of 5-amino-6-(D-ribitylamino)uracil with 3,4-dihydroxy-2-butanone 4-phosphate. This is the penultimate step in the biosynthesis of riboflavin. In Methanopyrus kandleri (strain AV19 / DSM 6324 / JCM 9639 / NBRC 100938), this protein is 6,7-dimethyl-8-ribityllumazine synthase.